Reading from the N-terminus, the 783-residue chain is B-cell scaffold protein with ankyrin repeats (783 aa).

The interval 1-154 (MLPVASGTRG…GYISVIRQIL (154 aa)) is interaction with ITPR2. Residues 25-153 (NAKDILLLYE…DGYISVIRQI (129 aa)) form the TIR domain. In terms of domain architecture, DBB spans 199–326 (VLPGEIPCEK…EIPYYEFKHL (128 aa)). ANK repeat units lie at residues 341–370 (ELPTLLHCAAKFGLKNLALHLLQCSGATRA) and 377–407 (DGSDLLHIAERHGHEELKEVFEDFLSQNTGR). Disordered regions lie at residues 422–521 (FSTY…AASQ), 538–586 (MERS…EDNE), 604–624 (SFIINRPPAPTPRPTHIPPKE), and 641–670 (RQSDGDKFYSLPKKPDKTRMEGPTFPSTRD). The segment covering 444–479 (RNTDRSEEPERSVEMKEEEAGAEARRSLSEGERESS) has biased composition (basic and acidic residues). The span at 505-515 (HCRPPLLPPRP) shows a compositional bias: pro residues. Residues 549–565 (ARPETREESSREEKKEE) show a composition bias toward basic and acidic residues. Residues 566-586 (AQEEEEEEENPYAFAETEDNE) are compositionally biased toward acidic residues. The segment covering 610 to 620 (PPAPTPRPTHI) has biased composition (pro residues). Residues 641–660 (RQSDGDKFYSLPKKPDKTRM) are compositionally biased toward basic and acidic residues. Phosphotyrosine is present on Tyr649.

Interacts with LYN, ITPR1 and ITPR2. Phosphorylated on tyrosines upon BCR activation. As to expression, specifically expressed in spleen. Highly expressed in immature B-cells and recirculating B-cells, and at low levels in pro-B and pre-B cells.

In terms of biological role, involved in B-cell receptor (BCR)-induced Ca(2+) mobilization from intracellular stores. Promotes Lyn-mediated phosphorylation of IP3 receptors 1 and 2. In Mus musculus (Mouse), this protein is B-cell scaffold protein with ankyrin repeats (Bank1).